Consider the following 246-residue polypeptide: Large ribosomal subunit protein uL2 (246 aa).

Positions 197–226 (SPYAHPHGGGSHPKGGTPVPKTAPPGQKVG) are disordered.

Belongs to the universal ribosomal protein uL2 family. As to quaternary structure, part of the 50S ribosomal subunit. Forms a bridge to the 30S subunit in the 70S ribosome.

Its function is as follows. One of the primary rRNA binding proteins. Required for association of the 30S and 50S subunits to form the 70S ribosome, for tRNA binding and peptide bond formation. It has been suggested to have peptidyltransferase activity; this is somewhat controversial. Makes several contacts with the 16S rRNA in the 70S ribosome. This is Large ribosomal subunit protein uL2 from Pyrobaculum islandicum (strain DSM 4184 / JCM 9189 / GEO3).